Reading from the N-terminus, the 594-residue chain is Zinc finger protein 703 (594 aa).

Polar residues predominate over residues M1 to E14. 3 disordered regions span residues M1–V37, T100–A298, and L345–A370. Residue S2 is modified to N-acetylserine. Residues G17–K30 show a composition bias toward gly residues. Low complexity-rich tracts occupy residues R134–A145, G177–S191, and G212–G225. A compositionally biased stretch (basic and acidic residues) spans E246–P256. At S257 the chain carries Phosphoserine. Gly residues predominate over residues L345–L356. Residues H460 to H488 form a C2H2-type zinc finger. R584 bears the Omega-N-methylarginine mark.

Belongs to the Elbow/Noc family. In terms of assembly, interacts with DCAF7 and PHB2. Interacts with TLE4; increases transcriptional repression. In terms of tissue distribution, expressed in mammary epithelium.

It localises to the nucleus. It is found in the cytoplasm. Its function is as follows. Transcriptional corepressor which does not bind directly to DNA and may regulate transcription through recruitment of histone deacetylases to gene promoters. Regulates cell adhesion, migration and proliferation. May be required for segmental gene expression during hindbrain development. The sequence is that of Zinc finger protein 703 (Znf703) from Mus musculus (Mouse).